Reading from the N-terminus, the 255-residue chain is Leucyl/phenylalanyl-tRNA--protein transferase (255 aa).

The protein belongs to the L/F-transferase family.

It is found in the cytoplasm. The catalysed reaction is N-terminal L-lysyl-[protein] + L-leucyl-tRNA(Leu) = N-terminal L-leucyl-L-lysyl-[protein] + tRNA(Leu) + H(+). It carries out the reaction N-terminal L-arginyl-[protein] + L-leucyl-tRNA(Leu) = N-terminal L-leucyl-L-arginyl-[protein] + tRNA(Leu) + H(+). The enzyme catalyses L-phenylalanyl-tRNA(Phe) + an N-terminal L-alpha-aminoacyl-[protein] = an N-terminal L-phenylalanyl-L-alpha-aminoacyl-[protein] + tRNA(Phe). In terms of biological role, functions in the N-end rule pathway of protein degradation where it conjugates Leu, Phe and, less efficiently, Met from aminoacyl-tRNAs to the N-termini of proteins containing an N-terminal arginine or lysine. The polypeptide is Leucyl/phenylalanyl-tRNA--protein transferase (Burkholderia pseudomallei (strain 1106a)).